The sequence spans 88 residues: Actobindin (88 aa).

Residue Met1 is modified to N-acetylmethionine. Positions 1–22 (MNPELQSAIGQGAALKHAETVD) are disordered. An N6,N6,N6-trimethyllysine modification is found at Lys35. The WH2 domain maps to 37-54 (DRSSFLEEVAKPHELKHA). Lys72 carries the post-translational modification N6,N6,N6-trimethyllysine.

As to quaternary structure, monomer.

In terms of biological role, is able to bind two actin monomers at high concentrations of G-actin. The chain is Actobindin from Acanthamoeba castellanii (Amoeba).